A 404-amino-acid chain; its full sequence is Cysteine desulfurase IscS (404 aa).

Pyridoxal 5'-phosphate-binding positions include 75 to 76, N155, Q183, and 203 to 205; these read AT and SAH. Position 206 is an N6-(pyridoxal phosphate)lysine (K206). T243 lines the pyridoxal 5'-phosphate pocket. The Cysteine persulfide intermediate role is filled by C328. [2Fe-2S] cluster is bound at residue C328.

This sequence belongs to the class-V pyridoxal-phosphate-dependent aminotransferase family. NifS/IscS subfamily. In terms of assembly, homodimer. Forms a heterotetramer with IscU, interacts with other sulfur acceptors. Requires pyridoxal 5'-phosphate as cofactor.

Its subcellular location is the cytoplasm. It carries out the reaction (sulfur carrier)-H + L-cysteine = (sulfur carrier)-SH + L-alanine. It participates in cofactor biosynthesis; iron-sulfur cluster biosynthesis. In terms of biological role, master enzyme that delivers sulfur to a number of partners involved in Fe-S cluster assembly, tRNA modification or cofactor biosynthesis. Catalyzes the removal of elemental sulfur atoms from cysteine to produce alanine. Functions as a sulfur delivery protein for Fe-S cluster synthesis onto IscU, an Fe-S scaffold assembly protein, as well as other S acceptor proteins. The chain is Cysteine desulfurase IscS from Neisseria meningitidis serogroup A / serotype 4A (strain DSM 15465 / Z2491).